The chain runs to 657 residues: Probable cobalt/nickel-exporting P-type ATPase (657 aa).

Helical transmembrane passes span 40–60, 62–82, 101–121, 268–288, and 299–319; these read WATV…NGAP, AMWW…SAWA, AAVG…IVIF, LGMV…GADL, and MIVA…LSAI. Aspartate 347 (4-aspartylphosphate intermediate) is an active-site residue. The Mg(2+) site is built by aspartate 543 and aspartate 547. Residues 596–618 form a helical membrane-spanning segment; it reads VVTVNLAIAATFIAVLVLWDLFG.

The protein belongs to the cation transport ATPase (P-type) (TC 3.A.3) family. Type IB subfamily.

It localises to the cell membrane. Functionally, involved in heavy metal homeostasis. Probably exports nickel and cobalt ions out of the cell. This Mycobacterium bovis (strain ATCC BAA-935 / AF2122/97) protein is Probable cobalt/nickel-exporting P-type ATPase (ctpD).